A 240-amino-acid chain; its full sequence is Urease accessory protein UreF (240 aa).

This sequence belongs to the UreF family. UreD, UreF and UreG form a complex that acts as a GTP-hydrolysis-dependent molecular chaperone, activating the urease apoprotein by helping to assemble the nickel containing metallocenter of UreC. The UreE protein probably delivers the nickel.

Its subcellular location is the cytoplasm. Its function is as follows. Required for maturation of urease via the functional incorporation of the urease nickel metallocenter. The sequence is that of Urease accessory protein UreF from Bradyrhizobium sp. (strain BTAi1 / ATCC BAA-1182).